Here is a 133-residue protein sequence, read N- to C-terminus: Large ribosomal subunit protein uL15 (133 aa).

The tract at residues 1–64 (MGLENLKPAK…QPLQRRLPKI (64 aa)) is disordered.

Belongs to the universal ribosomal protein uL15 family. As to quaternary structure, part of the 50S ribosomal subunit.

Binds to the 23S rRNA. The sequence is that of Large ribosomal subunit protein uL15 from Helicobacter pylori (strain G27).